A 1792-amino-acid polypeptide reads, in one-letter code: Eukaryotic translation initiation factor 4G (1792 aa).

Residues 1–12 show a composition bias toward basic and acidic residues; the sequence is MSQRGDRGEGHA. Disordered regions lie at residues 1 to 285, 424 to 446, 491 to 590, 612 to 659, 678 to 761, 874 to 912, 960 to 993, 999 to 1018, 1275 to 1299, 1407 to 1503, and 1537 to 1600; these read MSQR…PRPP, DSSG…TYGS, SPSM…PTPV, NSVP…EDLK, GVNK…NESH, VASE…EITR, SSSI…LDDW, MSTP…EANG, GERE…EERE, WQQR…HRTT, and ELSS…KLYS. Over residues 21-42 the composition is skewed to gly residues; the sequence is FGGGHRGGGGVGGAGKGGGGSS. A compositionally biased stretch (pro residues) spans 88–107; it reads PLRPPAPQNAPAHVPVPAPR. 2 stretches are compositionally biased toward polar residues: residues 147 to 156 and 179 to 191; these read RISSTSTSQG and STMQ…SSAP. Low complexity-rich tracts occupy residues 216–243, 263–278, and 432–442; these read PQAP…PLQQ, PSQV…SVPN, and PSVQQQSQPVS. Residues 491–517 are compositionally biased toward polar residues; the sequence is SPSMNTGPGSNKDNLAGSTTSGHSQVT. Composition is skewed to basic and acidic residues over residues 545–564, 571–587, and 633–643; these read DVNK…KDNE, KSGE…EKHP, and DSNKNATKDTR. Over residues 644–654 the composition is skewed to polar residues; the sequence is NLSQEPQSASS. Over residues 699-718 the composition is skewed to low complexity; the sequence is AADASSIDRSSARSTSESTE. Positions 964–990 are enriched in basic and acidic residues; that stretch reads ADHELPDESSEKEVNMGEDEGKKKVEL. The segment at 1018 to 1030 is EIF4E-binding; that stretch reads GRKRYSRDFLLTL. The 224-residue stretch at 1183-1406 folds into the MIF4G domain; sequence QRQLKAILNK…RDSIDLRKNK (224 aa). Residues 1278 to 1289 show a composition bias toward acidic residues; sequence EEAEADKTEEEG. 2 stretches are compositionally biased toward basic and acidic residues: residues 1290 to 1299 and 1411 to 1432; these read EIKQTKEERE and RKVE…ERHA. 2 stretches are compositionally biased toward low complexity: residues 1439–1450 and 1461–1470; these read RGSVVGSGPRRG and SAAALASPSS. Basic and acidic residues-rich tracts occupy residues 1490–1503 and 1559–1572; these read IRFE…HRTT and AREE…DRSG. Residues 1576-1593 show a composition bias toward polar residues; the sequence is PNTQFAGPSNRPASQEGR. The MI domain occupies 1603–1727; it reads DLREKSISAI…SLQEVGTLIE (125 aa).

This sequence belongs to the eukaryotic initiation factor 4G family. EIF4F is a multi-subunit complex, the composition of which varies with external and internal environmental conditions. It is composed of at least EIF4A, EIF4E and EIF4G. In higher plants two isoforms of EIF4F have been identified, named isoform EIF4F and isoform EIF(iso)4F. Isoform EIF4F has subunits p220 and p26, whereas isoform EIF(iso)4F has subunits p82 and p28.

Component of the protein complex eIF4F, which is involved in the recognition of the mRNA cap, ATP-dependent unwinding of 5'-terminal secondary structure and recruitment of mRNA to the ribosome. The sequence is that of Eukaryotic translation initiation factor 4G from Oryza sativa subsp. japonica (Rice).